We begin with the raw amino-acid sequence, 557 residues long: MESERSKRMGNACIPLKRIAYFLCLLSALLLTEGKKPAKPKCPAVCTCTKDNALCENARSIPRTVPPDVISLSFVRSGFTEISEGSFLFTPSLQLLLFTSNSFDVISDDAFIGLPHLEYLFIENNNIKSISRHTFRGLKSLIHLSLANNNLQTLPKDIFKGLDSLTNVDLRGNSFNCDCKLKWLVEWLGHTNATVEDIYCEGPPEYKKRKINSLSSKDFDCIITEFAKSQDLPYQSLSIDTFSYLNDEYVVIAQPFTGKCIFLEWDHVEKTFRNYDNITGTSTVVCKPIVIETQLYVIVAQLFGGSHIYKRDSFANKFIKIQDIEILKIRKPNDIETFKIENNWYFVVADSSKAGFTTIYKWNGNGFYSHQSLHAWYRDTDVEYLEIVRTPQTLRTPHLILSSSSQRPVIYQWNKATQLFTNQTDIPNMEDVYAVKHFSVKGDVYICLTRFIGDSKVMKWGGSSFQDIQRMPSRGSMVFQPLQINNYQYAILGSDYSFTQVYNWDAEKAKFVKFQELNVQAPRSFTHVSINKRNFLFASSFKGNTQIYKHVIVDLSA.

Positions 1–34 are cleaved as a signal peptide; that stretch reads MESERSKRMGNACIPLKRIAYFLCLLSALLLTEG. Positions 35–72 constitute an LRRNT domain; it reads KKPAKPKCPAVCTCTKDNALCENARSIPRTVPPDVISL. LRR repeat units lie at residues 92–113, 116–137, and 140–161; these read SLQL…AFIG, HLEY…TFRG, and SLIH…IFKG. In terms of domain architecture, LRRCT spans 173–223; sequence NSFNCDCKLKWLVEWLGHTNATVEDIYCEGPPEYKKRKINSLSSKDFDCII. N-linked (GlcNAc...) asparagine glycosylation occurs at Asn-192. EAR repeat units follow at residues 225–267, 271–313, 317–364, 366–415, 419–462, 464–506, and 510–552; these read EFAK…EWDH, TFRN…KRDS, KFIK…KWNG, GFYS…QWNK, LFTN…KWGG, SFQD…NWDA, and KFVK…KHVI. A glycan (N-linked (GlcNAc...) asparagine) is linked at Asn-277. N-linked (GlcNAc...) asparagine glycosylation occurs at Asn-422.

As to quaternary structure, oligomer. Interacts with KCNA1 within a complex containing KCNA1, KCNA4 and KCNAB1. Part of a complex containing ADAM22, DLG4/PSD95 and CACNG2/Stargazin. Can bind to ADAM11 and ADAM23. In terms of processing, glycosylated. As to expression, predominantly expressed in neural tissues, especially in brain. Expression is reduced in low-grade brain tumors and significantly reduced or absent in malignant gliomas. Expressed in the occipital cortex and hippocampus; higher amounts are observed in the parietal and frontal cortices, putamen, and, particularly, in the temporal neocortex, where it is between 3 and 5 times more abundant than in the hippocampus (at protein level). Expression is absent in the cerebellum. In terms of tissue distribution, abundantly expressed in the occipital cortex and weakly expressed in the hippocampus (at protein level).

The protein localises to the secreted. It is found in the synapse. The protein resides in the cytoplasm. Its subcellular location is the golgi apparatus. It localises to the endoplasmic reticulum. Regulates voltage-gated potassium channels assembled from KCNA1, KCNA4 and KCNAB1. It slows down channel inactivation by precluding channel closure mediated by the KCNAB1 subunit. Ligand for ADAM22 that positively regulates synaptic transmission mediated by AMPA-type glutamate receptors. Plays a role in suppressing the production of MMP1/3 through the phosphatidylinositol 3-kinase/ERK pathway. May play a role in the control of neuroblastoma cell survival. This chain is Leucine-rich glioma-inactivated protein 1 (LGI1), found in Homo sapiens (Human).